The following is a 272-amino-acid chain: Phosphatidylglycerol--prolipoprotein diacylglyceryl transferase (272 aa).

4 helical membrane-spanning segments follow: residues 16–36, 62–82, 97–117, and 129–149; these read VGLH…LSSF, FALG…VLFY, IWKG…WAAV, and LSVT…ALLI. R150 is an a 1,2-diacyl-sn-glycero-3-phospho-(1'-sn-glycerol) binding site. The next 2 helical transmembrane spans lie at 206–226 and 246–266; these read GVIR…VAVI and ILTI…GIIW.

Belongs to the Lgt family.

The protein resides in the cell inner membrane. It carries out the reaction L-cysteinyl-[prolipoprotein] + a 1,2-diacyl-sn-glycero-3-phospho-(1'-sn-glycerol) = an S-1,2-diacyl-sn-glyceryl-L-cysteinyl-[prolipoprotein] + sn-glycerol 1-phosphate + H(+). Its pathway is protein modification; lipoprotein biosynthesis (diacylglyceryl transfer). Functionally, catalyzes the transfer of the diacylglyceryl group from phosphatidylglycerol to the sulfhydryl group of the N-terminal cysteine of a prolipoprotein, the first step in the formation of mature lipoproteins. This is Phosphatidylglycerol--prolipoprotein diacylglyceryl transferase from Chlamydia trachomatis serovar D (strain ATCC VR-885 / DSM 19411 / UW-3/Cx).